The sequence spans 465 residues: E3 ubiquitin-protein ligase parkin (465 aa).

The Ubiquitin-like domain maps to 1–76 (MIVFVRFNSS…VHIVQRPWRK (76 aa)). A Phosphoserine; by PINK1 modification is found at serine 65. Positions 77-99 (GQEMNATGGDDPRNAAGGCEREP) are disordered. The necessary for PINK1-dependent localization to mitochondria stretch occupies residues 77 to 237 (GQEMNATGGD…LIATNSRNIT (161 aa)). Residues 141-225 (SIYNSFYVYC…PTSDKETSVA (85 aa)) form an RING-type 0; atypical zinc finger. Threonine 175 carries the post-translational modification Phosphothreonine; by PINK1. Positions 204–238 (TSAEFFFKCGAHPTSDKETSVALHLIATNSRNITC) are SYT11 binding 1. Residue threonine 217 is modified to Phosphothreonine. The tract at residues 234–465 (RNITCITCTD…VCMGDHWFDV (232 aa)) is TRIAD supradomain. Positions 238, 241, 253, 257, 260, 263, 289, 293, 332, and 337 each coordinate Zn(2+). Residues 238–293 (CITCTDVRSPVLVFQCNSRHVICLDCFHLYCVTRLNDRQFVHDPQLGYSLPCVAGC) form an RING-type 1 zinc finger. An SYT11 binding 2 region spans residues 257 to 293 (HVICLDCFHLYCVTRLNDRQFVHDPQLGYSLPCVAGC). Residues 313 to 377 (NRYQQYGAEE…CKEAYHEGEC (65 aa)) form an IBR-type zinc finger. A Glycyl lysine isopeptide (Lys-Gly) (interchain with G-Cter in ISG15) cross-link involves residue lysine 349. 4 residues coordinate Zn(2+): cysteine 352, cysteine 360, cysteine 365, and cysteine 368. Lysine 369 is covalently cross-linked (Glycyl lysine isopeptide (Lys-Gly) (interchain with G-Cter in ISG15)). Residues histidine 373 and cysteine 377 each contribute to the Zn(2+) site. Residues 378 to 410 (SAVFEASGTTTQAYRVDERAAEQARWEAASKET) are REP. Zn(2+) is bound by residues cysteine 418 and cysteine 421. Residues 418 to 449 (CPRCHVPVEKNGGCMHMKCPQPQCRLEWCWNC) form an RING-type 2; atypical zinc finger. Residue cysteine 431 is part of the active site. The Zn(2+) site is built by cysteine 436, cysteine 441, cysteine 446, cysteine 449, cysteine 457, and histidine 461.

This sequence belongs to the RBR family. Parkin subfamily. As to quaternary structure, forms an E3 ubiquitin ligase complex with UBE2L3 or UBE2L6. Mediates 'Lys-63'-linked polyubiquitination by associating with UBE2V1. Part of a SCF-like complex, consisting of PRKN, CUL1 and FBXW7. Interacts with SNCAIP. Binds to the C2A and C2B domains of SYT11. Interacts and regulates the turnover of SEPTIN5. Part of a complex, including STUB1, HSP70 and GPR37. The amount of STUB1 in the complex increases during ER stress. STUB1 promotes the dissociation of HSP70 from PRKN and GPR37, thus facilitating PRKN-mediated GPR37 ubiquitination. HSP70 transiently associates with unfolded GPR37 and inhibits the E3 activity of PRKN, whereas, STUB1 enhances the E3 activity of PRKN through promotion of dissociation of HSP70 from PRKN-GPR37 complexes. Interacts with PSMD4 and PACRG. Interacts with LRRK2. Interacts with RANBP2. Interacts with SUMO1 but not SUMO2, which promotes nuclear localization and autoubiquitination. Interacts (via first RING-type domain) with AIMP2 (via N-terminus). Interacts with PSMA7 and RNF41. Interacts with PINK1. Forms a complex with PINK1 and PARK7. Interacts with CHPF, the interaction with isoform 2 may facilitate PRKN transport into the mitochondria. Interacts with MFN2 (phosphorylated), promotes PRKN localization in dysfunctional depolarized mitochondria. Interacts with FBXO7; this promotes translocation to dysfunctional depolarized mitochondria. Interacts with ZNF746. Interacts with heat shock protein 70 family members, including HSPA1L, HSPA1A and HSPA8; interaction HSPA1L promotes translocation to damaged mitochondria. Interacts with BAG4 and, to a lesser extent, BAG5; interaction with BAG4 inhibits translocation to damaged mitochondria. Forms a complex with PRKN and PARK7. Interacts with AMBRA1. In terms of processing, ISGylated. Conjugated to ubiquitin-like protein ISG15 upon IFN-beta stimulation. ISGylation positively regulates its E3 ligase activity. Auto-ubiquitinates in an E2-dependent manner leading to its own degradation. Also polyubiquitinated by RNF41 for proteasomal degradation. Post-translationally, S-nitrosylated. The inhibition of PRKN ubiquitin E3 ligase activity by S-nitrosylation could contribute to the degenerative process in PD by impairing the ubiquitination of PRKN substrates. In terms of processing, phosphorylated. Activation requires phosphorylation at Ser-65 by PINK1 and binding to PINK1 phosphorylated ubiquitin. Phosphorylation at Thr-175 by PINK1 and at Thr-217 is important for mitochondrial localization. Highly expressed in the brain including the substantia nigra. Expressed in heart, testis and skeletal muscle. Expression is down-regulated or absent in tumor biopsies, and absent in the brain of PARK2 patients. Overexpression protects dopamine neurons from kainate-mediated apoptosis. Found in serum (at protein level).

Its subcellular location is the cytoplasm. The protein localises to the cytosol. The protein resides in the nucleus. It is found in the endoplasmic reticulum. It localises to the mitochondrion. Its subcellular location is the mitochondrion outer membrane. The protein localises to the cell projection. The protein resides in the neuron projection. It is found in the postsynaptic density. It localises to the presynapse. It carries out the reaction [E2 ubiquitin-conjugating enzyme]-S-ubiquitinyl-L-cysteine + [acceptor protein]-L-lysine = [E2 ubiquitin-conjugating enzyme]-L-cysteine + [acceptor protein]-N(6)-ubiquitinyl-L-lysine.. It participates in protein modification; protein ubiquitination. In the autoinhibited state the side chain of Phe-463 inserts into a hydrophobic groove in RING-0, occluding the ubiquitin acceptor site Cys-431, whereas the REP repressor element binds RING-1 and blocks its E2-binding site. Activation of PRKN requires 2 steps: (1) phosphorylation at Ser-65 by PINK1 and (2) binding to phosphorylated ubiquitin, leading to unlock repression of the catalytic Cys-431 by the RING-0 region via an allosteric mechanism and converting PRKN to its fully-active form. According to another report, phosphorylation at Ser-65 by PINK1 is not essential for activation and only binding to phosphorylated ubiquitin is essential to unlock repression. In addition, ISG15 conjugation positively regulates its ubiquitin E3 ligase activity by suppressing the intramolecular interaction that maintains its autoinhibited conformation. In terms of biological role, functions within a multiprotein E3 ubiquitin ligase complex, catalyzing the covalent attachment of ubiquitin moieties onto substrate proteins. Substrates include SYT11 and VDAC1. Other substrates are BCL2, CCNE1, GPR37, RHOT1/MIRO1, MFN1, MFN2, STUB1, SNCAIP, SEPTIN5, TOMM20, USP30, ZNF746, MIRO1 and AIMP2. Mediates monoubiquitination as well as 'Lys-6', 'Lys-11', 'Lys-48'-linked and 'Lys-63'-linked polyubiquitination of substrates depending on the context. Participates in the removal and/or detoxification of abnormally folded or damaged protein by mediating 'Lys-63'-linked polyubiquitination of misfolded proteins such as PARK7: 'Lys-63'-linked polyubiquitinated misfolded proteins are then recognized by HDAC6, leading to their recruitment to aggresomes, followed by degradation. Mediates 'Lys-63'-linked polyubiquitination of a 22 kDa O-linked glycosylated isoform of SNCAIP, possibly playing a role in Lewy-body formation. Mediates monoubiquitination of BCL2, thereby acting as a positive regulator of autophagy. Protects against mitochondrial dysfunction during cellular stress, by acting downstream of PINK1 to coordinate mitochondrial quality control mechanisms that remove and replace dysfunctional mitochondrial components. Depending on the severity of mitochondrial damage and/or dysfunction, activity ranges from preventing apoptosis and stimulating mitochondrial biogenesis to regulating mitochondrial dynamics and eliminating severely damaged mitochondria via mitophagy. Activation and recruitment onto the outer membrane of damaged/dysfunctional mitochondria (OMM) requires PINK1-mediated phosphorylation of both PRKN and ubiquitin. After mitochondrial damage, functions with PINK1 to mediate the decision between mitophagy or preventing apoptosis by inducing either the poly- or monoubiquitination of VDAC1, respectively; polyubiquitination of VDAC1 promotes mitophagy, while monoubiquitination of VDAC1 decreases mitochondrial calcium influx which ultimately inhibits apoptosis. When cellular stress results in irreversible mitochondrial damage, promotes the autophagic degradation of dysfunctional depolarized mitochondria (mitophagy) by promoting the ubiquitination of mitochondrial proteins such as TOMM20, RHOT1/MIRO1, MFN1 and USP30. Preferentially assembles 'Lys-6'-, 'Lys-11'- and 'Lys-63'-linked polyubiquitin chains, leading to mitophagy. The PINK1-PRKN pathway also promotes fission of damaged mitochondria by PINK1-mediated phosphorylation which promotes the PRKN-dependent degradation of mitochondrial proteins involved in fission such as MFN2. This prevents the refusion of unhealthy mitochondria with the mitochondrial network or initiates mitochondrial fragmentation facilitating their later engulfment by autophagosomes. Regulates motility of damaged mitochondria via the ubiquitination and subsequent degradation of MIRO1 and MIRO2; in motor neurons, this likely inhibits mitochondrial intracellular anterograde transport along the axons which probably increases the chance of the mitochondria undergoing mitophagy in the soma. Involved in mitochondrial biogenesis via the 'Lys-48'-linked polyubiquitination of transcriptional repressor ZNF746/PARIS which leads to its subsequent proteasomal degradation and allows activation of the transcription factor PPARGC1A. Limits the production of reactive oxygen species (ROS). Regulates cyclin-E during neuronal apoptosis. In collaboration with CHPF isoform 2, may enhance cell viability and protect cells from oxidative stress. Independently of its ubiquitin ligase activity, protects from apoptosis by the transcriptional repression of p53/TP53. May protect neurons against alpha synuclein toxicity, proteasomal dysfunction, GPR37 accumulation, and kainate-induced excitotoxicity. May play a role in controlling neurotransmitter trafficking at the presynaptic terminal and in calcium-dependent exocytosis. May represent a tumor suppressor gene. The chain is E3 ubiquitin-protein ligase parkin from Homo sapiens (Human).